Reading from the N-terminus, the 208-residue chain is Protein-L-isoaspartate O-methyltransferase (208 aa).

Ser-59 is an active-site residue.

Belongs to the methyltransferase superfamily. L-isoaspartyl/D-aspartyl protein methyltransferase family.

The protein localises to the cytoplasm. The enzyme catalyses [protein]-L-isoaspartate + S-adenosyl-L-methionine = [protein]-L-isoaspartate alpha-methyl ester + S-adenosyl-L-homocysteine. In terms of biological role, catalyzes the methyl esterification of L-isoaspartyl residues in peptides and proteins that result from spontaneous decomposition of normal L-aspartyl and L-asparaginyl residues. It plays a role in the repair and/or degradation of damaged proteins. The protein is Protein-L-isoaspartate O-methyltransferase of Shigella sonnei (strain Ss046).